The primary structure comprises 510 residues: NAD(P)H-quinone oxidoreductase subunit 2 A, chloroplastic (510 aa).

13 helical membrane passes run 24-44 (LLLFHGSFIFPECILIFGLIL), 57-77 (IPWLYFISSTSLVMSITALLF), 99-119 (IFQFLILLCSTLCIPLSVEYI), 124-144 (MAITEFLLFVLTATLGGMFLC), 149-169 (LITIFVAPECFSLCSYLLSGY), 183-203 (YLLMGGASSSILVHGFSWLYG), 227-247 (PGISIALIFITVGIGFKLSPA), 295-315 (WHLLLEILAILSMILGNLIAI), 323-343 (MLAYSSIGQIGYVIIGIIVGD), 347-367 (GYASMITYMLFYISMNLGTFA), 395-415 (ALSSALCLLSLGGLPPLAGFF), 418-438 (LHLFWCGWQAGLYFLVSIGLL), and 484-504 (MIVCVIASTIPGISMNPIIAI).

This sequence belongs to the complex I subunit 2 family. In terms of assembly, NDH is composed of at least 16 different subunits, 5 of which are encoded in the nucleus.

It is found in the plastid. Its subcellular location is the chloroplast thylakoid membrane. It carries out the reaction a plastoquinone + NADH + (n+1) H(+)(in) = a plastoquinol + NAD(+) + n H(+)(out). It catalyses the reaction a plastoquinone + NADPH + (n+1) H(+)(in) = a plastoquinol + NADP(+) + n H(+)(out). NDH shuttles electrons from NAD(P)H:plastoquinone, via FMN and iron-sulfur (Fe-S) centers, to quinones in the photosynthetic chain and possibly in a chloroplast respiratory chain. The immediate electron acceptor for the enzyme in this species is believed to be plastoquinone. Couples the redox reaction to proton translocation, and thus conserves the redox energy in a proton gradient. The protein is NAD(P)H-quinone oxidoreductase subunit 2 A, chloroplastic of Platanus occidentalis (Sycamore).